The primary structure comprises 359 residues: Alanine racemase, biosynthetic (359 aa).

Catalysis depends on Lys-34, which acts as the Proton acceptor; specific for D-alanine. Lys-34 is modified (N6-(pyridoxal phosphate)lysine). Arg-129 serves as a coordination point for substrate. The active-site Proton acceptor; specific for L-alanine is Tyr-255. Residue Met-303 coordinates substrate.

Belongs to the alanine racemase family. Pyridoxal 5'-phosphate serves as cofactor.

It carries out the reaction L-alanine = D-alanine. It functions in the pathway amino-acid biosynthesis; D-alanine biosynthesis; D-alanine from L-alanine: step 1/1. Its pathway is cell wall biogenesis; peptidoglycan biosynthesis. In terms of biological role, catalyzes the interconversion of L-alanine and D-alanine. Provides the D-alanine required for cell wall biosynthesis. This is Alanine racemase, biosynthetic (alr) from Escherichia coli O6:H1 (strain CFT073 / ATCC 700928 / UPEC).